A 325-amino-acid polypeptide reads, in one-letter code: MKVSIIGSTGRVGRATALCLAEEEAVKTLHLISRKESLEQNLGEVLDMSDALAAKGVSVKLENSADIENVYGSRIVVITAGVPRTADMDRDDLAFKNGRIVADYARQIARFAPDSIILVVTNPVDVMTYVALRYSGFHPSRVFGLGNHLDSLRLKNYMARHFNVHVSEVHTRVIGQHGPYMVPLISSTSIGGIPIEHYARRDYFSGYKKFDLKKTIDKVIHAGSNIISRKGATEYGPAFAISNIVTTILNDERRILTVSTLMEGEIDGIRDVCLGVPVKLGKNGIEGVVPVLMDRDEREAFREAANHVRDSTRRVMEFLDEELPL.

Residue 7-13 coordinates NADP(+); the sequence is GSTGRVG. Positions 84 and 90 each coordinate substrate. NADP(+) is bound by residues asparagine 97 and 120–122; that span reads VTN. Substrate contacts are provided by asparagine 122 and arginine 153. The active-site Proton acceptor is histidine 177.

This sequence belongs to the LDH/MDH superfamily.

It carries out the reaction (S)-malate + NADP(+) = oxaloacetate + NADPH + H(+). The enzyme catalyses (S)-malate + NAD(+) = oxaloacetate + NADH + H(+). Catalyzes the reversible oxidation of malate to oxaloacetate. This Methanothermobacter thermautotrophicus (strain ATCC 29096 / DSM 1053 / JCM 10044 / NBRC 100330 / Delta H) (Methanobacterium thermoautotrophicum) protein is Malate dehydrogenase (mdh).